The sequence spans 70 residues: Putative microRNA 17 host gene protein (70 aa).

At 1 to 20 (MFCHVDVKISSKRYTWTKLP) the chain is on the cytoplasmic side. The chain crosses the membrane as a helical span at residues 21–43 (LNVPKLVLIYLQSHFVLFFFSMC). At 44 to 70 (QSIWERPAIGRATTSSASWMVGYDCLL) the chain is on the extracellular side.

As to expression, highly expressed in B-cell lymphoma and lung cancer.

It localises to the membrane. This is Putative microRNA 17 host gene protein (MIR17HG) from Homo sapiens (Human).